The sequence spans 277 residues: Outer plastidial membrane protein porin (277 aa).

It belongs to the eukaryotic mitochondrial porin (TC 1.B.8.1) family.

The protein localises to the plastid outer membrane. In terms of biological role, forms a channel through the cell membrane that allows diffusion of small hydrophilic molecules. The channel adopts an open conformation at low or zero membrane potential and a closed conformation at potentials above 30-40 mV. The open state has a weak anion selectivity whereas the closed state is cation-selective. This Zea mays (Maize) protein is Outer plastidial membrane protein porin (POR1).